We begin with the raw amino-acid sequence, 463 residues long: Glutamate--tRNA ligase 1 (463 aa).

The 'HIGH' region motif lies at Pro10–Gly20. Residues Lys238–Arg242 carry the 'KMSKS' region motif. Residue Lys241 participates in ATP binding.

Belongs to the class-I aminoacyl-tRNA synthetase family. Glutamate--tRNA ligase type 1 subfamily. As to quaternary structure, monomer.

The protein resides in the cytoplasm. It carries out the reaction tRNA(Glu) + L-glutamate + ATP = L-glutamyl-tRNA(Glu) + AMP + diphosphate. Its function is as follows. Catalyzes the attachment of glutamate to tRNA(Glu) in a two-step reaction: glutamate is first activated by ATP to form Glu-AMP and then transferred to the acceptor end of tRNA(Glu). The polypeptide is Glutamate--tRNA ligase 1 (Helicobacter pylori (strain Shi470)).